We begin with the raw amino-acid sequence, 188 residues long: CASP-like protein 4B1 (188 aa).

The segment at 1–34 (MTNPDNMKPVEATDVESAAEKTSEPTPASGTSTI) is disordered. The Cytoplasmic segment spans residues 1–46 (MTNPDNMKPVEATDVESAAEKTSEPTPASGTSTITQRWKREDLIKK). The span at 24–34 (EPTPASGTSTI) shows a compositional bias: polar residues. Residues 47–67 (ASPITRGICLLFSLIAFLIMV) traverse the membrane as a helical segment. The Extracellular portion of the chain corresponds to 68 to 84 (SNKHGYGRNFNDYEEYR). The chain crosses the membrane as a helical span at residues 85 to 105 (YVLAISIISTLYTAWQTFAHF). Residues 106–124 (SKREIFDRRTSILVDFSGD) lie on the Cytoplasmic side of the membrane. Residues 125–145 (QIVAYLLISAASSAIPLTNIF) traverse the membrane as a helical segment. The Extracellular portion of the chain corresponds to 146-156 (REGQDNIFTDS). The helical transmembrane segment at 157–177 (AASAISMAIFAFIALALSALF) threads the bilayer. Topologically, residues 178 to 188 (SGYKLSTHSFI) are cytoplasmic.

It belongs to the Casparian strip membrane proteins (CASP) family. In terms of assembly, homodimer and heterodimers.

The protein localises to the cell membrane. The polypeptide is CASP-like protein 4B1 (Arabidopsis thaliana (Mouse-ear cress)).